A 535-amino-acid chain; its full sequence is Methylmalonate-semialdehyde/malonate-semialdehyde dehydrogenase [acylating], mitochondrial (535 aa).

The N-terminal 32 residues, 1-32 (MAAAVAAAAAVRSRILQVSSKVNSTWYPASSF), are a transit peptide targeting the mitochondrion. Lys47, Lys52, Lys55, and Lys76 each carry N6-acetyllysine; alternate. Residues Lys47, Lys52, Lys55, and Lys76 each carry the N6-succinyllysine; alternate modification. At Lys87 the chain carries N6-acetyllysine. An N6-acetyllysine; alternate mark is found at Lys117 and Lys129. An N6-succinyllysine; alternate mark is found at Lys117 and Lys129. NAD(+) is bound by residues Ala183, Phe185, Lys209, Glu212, Arg213, and Ser262. Ser262 bears the Phosphoserine mark. N6-acetyllysine is present on Lys298. Cys317 serves as the catalytic Nucleophile. N6-acetyllysine is present on residues Lys330 and Lys331. Residues Lys364 and Lys376 each carry the N6-acetyllysine; alternate modification. Lys364 and Lys376 each carry N6-succinyllysine; alternate. Ser380 carries the post-translational modification Phosphoserine. Lys391 carries the N6-succinyllysine modification. Residue Glu417 coordinates NAD(+). Residue Lys500 is modified to N6-acetyllysine. At Lys517 the chain carries N6-succinyllysine.

This sequence belongs to the aldehyde dehydrogenase family. As to quaternary structure, homotetramer. In terms of tissue distribution, expressed in the head and flagellum of epididymal sperm but not in testicular sperm (at protein level). Kidney &gt; liver &gt; heart &gt; muscle &gt; brain.

The protein localises to the mitochondrion. The catalysed reaction is 3-oxopropanoate + NAD(+) + CoA + H2O = hydrogencarbonate + acetyl-CoA + NADH + H(+). It carries out the reaction 2-methyl-3-oxopropanoate + NAD(+) + CoA + H2O = propanoyl-CoA + hydrogencarbonate + NADH + H(+). The enzyme catalyses (R)-2-methyl-3-oxopropanoate + NAD(+) + CoA + H2O = propanoyl-CoA + hydrogencarbonate + NADH + H(+). It catalyses the reaction (S)-2-methyl-3-oxopropanoate + NAD(+) + CoA + H2O = propanoyl-CoA + hydrogencarbonate + NADH + H(+). Malonate and methylmalonate semialdehyde dehydrogenase involved in the catabolism of valine, thymine, and compounds catabolized by way of beta-alanine, including uracil and cytidine. The sequence is that of Methylmalonate-semialdehyde/malonate-semialdehyde dehydrogenase [acylating], mitochondrial from Rattus norvegicus (Rat).